A 230-amino-acid polypeptide reads, in one-letter code: Ion-translocating oxidoreductase complex subunit E (230 aa).

6 helical membrane passes run 18–38, 39–59, 63–83, 86–106, 125–145, and 182–202; these read ALVQLLGLCPLLAVTSTATNA, LGLGLATTLVLTLTNLTVSAL, TPAEIRIPIYVMIIASVVSAV, LINAYAFGLYQSLGIFIPLIV, WLSALDGFSIGMGATGAMFVL, and PFLLAMLPPGAFIGLGLMLAV.

The protein belongs to the NqrDE/RnfAE family. As to quaternary structure, the complex is composed of six subunits: RsxA, RsxB, RsxC, RsxD, RsxE and RsxG.

The protein resides in the cell inner membrane. In terms of biological role, part of a membrane-bound complex that couples electron transfer with translocation of ions across the membrane. Required to maintain the reduced state of SoxR. The protein is Ion-translocating oxidoreductase complex subunit E of Salmonella agona (strain SL483).